A 118-amino-acid chain; its full sequence is Small ribosomal subunit protein uS13 (118 aa).

The disordered stretch occupies residues 94 to 118 (SLPLRGQRTKTNARTRKGPRKPIRK).

The protein belongs to the universal ribosomal protein uS13 family. As to quaternary structure, part of the 30S ribosomal subunit. Forms a loose heterodimer with protein S19. Forms two bridges to the 50S subunit in the 70S ribosome.

Located at the top of the head of the 30S subunit, it contacts several helices of the 16S rRNA. In the 70S ribosome it contacts the 23S rRNA (bridge B1a) and protein L5 of the 50S subunit (bridge B1b), connecting the 2 subunits; these bridges are implicated in subunit movement. Contacts the tRNAs in the A and P-sites. This Shewanella halifaxensis (strain HAW-EB4) protein is Small ribosomal subunit protein uS13.